The following is a 551-amino-acid chain: Membrane protein insertase YidC (551 aa).

A helical membrane pass occupies residues 3–23 (ANHIRILLLVTIAIMFISLMG). Positions 33–55 (NTKQQTSATQNNSHYDNADSSTN) are disordered. 3 helical membrane passes run 361–381 (LVGN…LIFY), 431–451 (LSGC…YWVL), and 504–524 (VMMF…SGLV).

Belongs to the OXA1/ALB3/YidC family. Type 1 subfamily. As to quaternary structure, interacts with the Sec translocase complex via SecD. Specifically interacts with transmembrane segments of nascent integral membrane proteins during membrane integration.

The protein localises to the cell inner membrane. In terms of biological role, required for the insertion and/or proper folding and/or complex formation of integral membrane proteins into the membrane. Involved in integration of membrane proteins that insert both dependently and independently of the Sec translocase complex, as well as at least some lipoproteins. Aids folding of multispanning membrane proteins. This chain is Membrane protein insertase YidC, found in Francisella tularensis subsp. holarctica (strain OSU18).